A 118-amino-acid polypeptide reads, in one-letter code: Large ribosomal subunit protein bL20 (118 aa).

Belongs to the bacterial ribosomal protein bL20 family.

Its function is as follows. Binds directly to 23S ribosomal RNA and is necessary for the in vitro assembly process of the 50S ribosomal subunit. It is not involved in the protein synthesizing functions of that subunit. This chain is Large ribosomal subunit protein bL20, found in Sulfurovum sp. (strain NBC37-1).